The primary structure comprises 675 residues: Zinc finger protein 526 (675 aa).

C2H2-type zinc fingers lie at residues 56-78 (FMCS…QEQH), 108-130 (FQCG…QDAH), and 140-163 (YQCG…KTQH). Residues 160-195 (KTQHLSSAADEPPSPLPPPTPPPPPPPPPPPPPPEV) are disordered. Over residues 171–194 (PPSPLPPPTPPPPPPPPPPPPPPE) the composition is skewed to pro residues. The segment at 200–222 (YECPECSTLCATPEEFLEHQGTH) adopts a C2H2-type 4 zinc-finger fold. Residues 225-234 (SLEKEEHNGL) are compositionally biased toward basic and acidic residues. The segment at 225–283 (SLEKEEHNGLEEEEEDEEEGEEEEDDDDEETDEEEASSELTADDTGSNKSTADSAQSCG) is disordered. The span at 235–261 (EEEEEDEEEGEEEEDDDDEETDEEEAS) shows a compositional bias: acidic residues. The span at 269-281 (TGSNKSTADSAQS) shows a compositional bias: polar residues. 4 C2H2-type zinc fingers span residues 312-334 (FHCS…GRAH), 339-361 (HECT…QRLH), 367-389 (YLCV…RRAH), and 395-416 (HRCR…RRTH). Residues 415–439 (THTGKSGTPTRVATVSPAPAEPTPP) are disordered. Residues 418 to 427 (GKSGTPTRVA) are compositionally biased toward polar residues. 5 consecutive C2H2-type zinc fingers follow at residues 447 to 470 (LPCP…RAVH), 477 to 499 (HRCG…LRTH), 505 to 527 (FQCH…QLTH), 533 to 555 (YQCL…RRLH), and 578 to 600 (YYCG…QRVH). Residues 606-625 (LTLQPPRSPSPVPPPPPEPQ) form a disordered region. The segment covering 611–624 (PRSPSPVPPPPPEP) has biased composition (pro residues).

It belongs to the krueppel C2H2-type zinc-finger protein family.

Its subcellular location is the nucleus. In terms of biological role, may be involved in transcriptional regulation. The sequence is that of Zinc finger protein 526 (Znf526) from Mus musculus (Mouse).